Consider the following 492-residue polypeptide: GTPase Obg (492 aa).

Positions 2-159 (PRFVDRVVIH…RELTLELKTV (158 aa)) constitute an Obg domain. One can recognise an OBG-type G domain in the interval 160–340 (ADVGLIGFPS…LIFGLWQMIS (181 aa)). Residues 166–173 (GFPSAGKS), 191–195 (FTTLV), 212–215 (DVPG), 292–295 (NKID), and 321–323 (STV) each bind GTP. Mg(2+) contacts are provided by serine 173 and threonine 193. Positions 358 to 438 (PVPVDDSGFR…IGDMTFDWEP (81 aa)) constitute an OCT domain. The segment at 441–492 (PAGQQVVLSGRGTDARLERTERVGAAERKAARRQRRTGDDAERGTTERGENT) is disordered. 2 stretches are compositionally biased toward basic and acidic residues: residues 453–469 (TDARLERTERVGAAERK) and 476–492 (RTGDDAERGTTERGENT).

This sequence belongs to the TRAFAC class OBG-HflX-like GTPase superfamily. OBG GTPase family. In terms of assembly, monomer. Mg(2+) serves as cofactor.

It localises to the cytoplasm. Functionally, an essential GTPase which binds GTP, GDP and possibly (p)ppGpp with moderate affinity, with high nucleotide exchange rates and a fairly low GTP hydrolysis rate. Plays a role in control of the cell cycle, stress response, ribosome biogenesis and in those bacteria that undergo differentiation, in morphogenesis control. This chain is GTPase Obg, found in Mycolicibacterium paratuberculosis (strain ATCC BAA-968 / K-10) (Mycobacterium paratuberculosis).